A 104-amino-acid polypeptide reads, in one-letter code: MSSVPLSVYLVLALILFCIGLYGALTKRNTVIVLICIELMLNAVNINLVAFAKYGAHPGIAGQIFALFTITVAAAEAAVGLAILMALYRNRKTVHIDEIDSMKH.

3 consecutive transmembrane segments (helical) span residues 4 to 24, 31 to 51, and 64 to 84; these read VPLSVYLVLALILFCIGLYGA, VIVLICIELMLNAVNINLVAF, and IFALFTITVAAAEAAVGLAIL.

It belongs to the complex I subunit 4L family. As to quaternary structure, NDH-1 is composed of 14 different subunits. Subunits NuoA, H, J, K, L, M, N constitute the membrane sector of the complex.

It is found in the cell membrane. It carries out the reaction a quinone + NADH + 5 H(+)(in) = a quinol + NAD(+) + 4 H(+)(out). In terms of biological role, NDH-1 shuttles electrons from NADH, via FMN and iron-sulfur (Fe-S) centers, to quinones in the respiratory chain. The immediate electron acceptor for the enzyme in this species is believed to be a menaquinone. Couples the redox reaction to proton translocation (for every two electrons transferred, four hydrogen ions are translocated across the cytoplasmic membrane), and thus conserves the redox energy in a proton gradient. The chain is NADH-quinone oxidoreductase subunit K from Geobacillus sp. (strain WCH70).